We begin with the raw amino-acid sequence, 59 residues long: UPF0434 protein GOX0764 (59 aa).

Belongs to the UPF0434 family.

The polypeptide is UPF0434 protein GOX0764 (Gluconobacter oxydans (strain 621H) (Gluconobacter suboxydans)).